The following is a 245-amino-acid chain: Phosphoribosylaminoimidazole-succinocarboxamide synthase (245 aa).

Belongs to the SAICAR synthetase family.

It catalyses the reaction 5-amino-1-(5-phospho-D-ribosyl)imidazole-4-carboxylate + L-aspartate + ATP = (2S)-2-[5-amino-1-(5-phospho-beta-D-ribosyl)imidazole-4-carboxamido]succinate + ADP + phosphate + 2 H(+). It functions in the pathway purine metabolism; IMP biosynthesis via de novo pathway; 5-amino-1-(5-phospho-D-ribosyl)imidazole-4-carboxamide from 5-amino-1-(5-phospho-D-ribosyl)imidazole-4-carboxylate: step 1/2. This chain is Phosphoribosylaminoimidazole-succinocarboxamide synthase, found in Nostoc punctiforme (strain ATCC 29133 / PCC 73102).